The sequence spans 216 residues: Probable GTP-binding protein EngB (216 aa).

An EngB-type G domain is found at 27–201 (GGVEIAFAGR…AQTLTGWYLA (175 aa)). Residues 35 to 42 (GRSNAGKS), 62 to 66 (GRTQL), 80 to 83 (DLPG), 147 to 150 (TKAD), and 180 to 182 (FSS) each bind GTP. Mg(2+) is bound by residues serine 42 and threonine 64.

Belongs to the TRAFAC class TrmE-Era-EngA-EngB-Septin-like GTPase superfamily. EngB GTPase family. The cofactor is Mg(2+).

Functionally, necessary for normal cell division and for the maintenance of normal septation. The chain is Probable GTP-binding protein EngB from Aeromonas hydrophila subsp. hydrophila (strain ATCC 7966 / DSM 30187 / BCRC 13018 / CCUG 14551 / JCM 1027 / KCTC 2358 / NCIMB 9240 / NCTC 8049).